We begin with the raw amino-acid sequence, 347 residues long: MNHYIRTIGSMLILVYSMLAAFLFIDKVFVNIIYFQGMFYTQIFGIPVFLFLNLIIILLCIIVGSVLAYKINQQNDWIKTQIERSMEGETVGINDQNIEIYSETLDLYHTLVPLNQELHKLRLKTQNLTNENYNINDVKVKKIIEDERQRLARELHDSVSQQLFAASMMLSAIKETKLEPPLDQQIPILEKMVQDSQLEMRALLLHLRPLGLKDKSLGEGIKDLVIDLQKKVPMKVVHEIQDFKVPKGIEDHLFRITQEAISNTLRHSNGTKVTVELFNKDDYLLLRIQDNGKGFNVDEKLEQSYGLKNMRERALEIGATFHIVSLPDSGTRIEVKAPLNKEDSYDD.

Helical transmembrane passes span 13 to 33 (ILVY…VNII) and 43 to 63 (IFGI…CIIV). One can recognise a Histidine kinase domain in the interval 150 to 341 (RLARELHDSV…RIEVKAPLNK (192 aa)). Histidine 156 carries the phosphohistidine modification.

Autophosphorylated on His-156.

The protein localises to the cell membrane. The enzyme catalyses ATP + protein L-histidine = ADP + protein N-phospho-L-histidine.. Member of the two-component regulatory system PprA/PprB involved in biofilm formation by controlling the expression of many related genes including type IVb pili major subunit flp pilin, adhesin bapA or cupE fimbriae. Also modulates quorum-sensing signal production acting on both negative and positive modulators. Functions as a heme sensor histidine kinase which is autophosphorylated at a histidine residue and transfers its phosphate group to PprB. The polypeptide is Sensor protein VraS (vraS) (Staphylococcus aureus (strain COL)).